A 1566-amino-acid polypeptide reads, in one-letter code: Arginine-glutamic acid dipeptide repeats protein (1566 aa).

A compositionally biased stretch (basic and acidic residues) spans 1-36 (MTADKDKDKDKEKDRDRDRDREREKRDKARESENSR). Residues 1–90 (MTADKDKDKD…KKKSRYERTD (90 aa)) are disordered. 2 positions are modified to phosphoserine: serine 53 and serine 56. The span at 74–85 (KNKKKPPKKKSR) shows a compositional bias: basic residues. One can recognise a BAH domain in the interval 103–283 (VVYRPGDCVY…PETRRLNSTQ (181 aa)). Threonine 120 carries the post-translational modification Phosphothreonine. Phosphoserine occurs at positions 142 and 304. In terms of domain architecture, ELM2 spans 284-387 (GEIRVGPSHQ…KALQRLVKKP (104 aa)). One can recognise an SANT domain in the interval 391–443 (LIEKCWTEDEVKRFVKGLRQYGKNFFRIRKELLPNKETGELITFYYYWKKTPE). The tract at residues 464-495 (TRTASTPVNTPSRPPSSEFLDLSSASEDDFDS) is disordered. Residues 465–474 (RTASTPVNTP) show a composition bias toward polar residues. Over residues 479-488 (SSEFLDLSSA) the composition is skewed to low complexity. The segment at 507–532 (CRHCFTTTSKDWHHGGRENILLCTDC) adopts a GATA-type zinc-finger fold. The segment at 542 to 1133 (LPPIEKPVDP…PSHASQSARF (592 aa)) is disordered. Residue lysine 560 forms a Glycyl lysine isopeptide (Lys-Gly) (interchain with G-Cter in SUMO2) linkage. Serine 594, serine 600, and serine 613 each carry phosphoserine. The span at 609–623 (SGRNSPSAASTSSND) shows a compositional bias: low complexity. Over residues 624–640 (SKAETVKKSAKKVKEEA) the composition is skewed to basic and acidic residues. A Glycyl lysine isopeptide (Lys-Gly) (interchain with G-Cter in SUMO2) cross-link involves residue lysine 637. Residues serine 642, serine 656, serine 675, and serine 679 each carry the phosphoserine modification. The segment covering 652-673 (EKVASDTEEADRTSSKKTKTQE) has biased composition (basic and acidic residues). Basic and acidic residues predominate over residues 688-708 (SDSRSVNDEGSSDPKDIDQDN). The span at 709-720 (RSTSPSIPSPQD) shows a compositional bias: polar residues. Residues 726–751 (DSSAQQQMLQAQPPALQAPTGVTPAP) show a composition bias toward low complexity. Positions 752-767 (SSAPPGTPQLPTPGPT) are enriched in pro residues. Residues 778-796 (SPTASQAPNQPQAPTAPVP) are compositionally biased toward low complexity. The span at 809 to 827 (QRPPSPHPPPHPSPHPPLQ) shows a compositional bias: pro residues. Positions 829 to 840 (LTGSAGQPSAPS) are enriched in polar residues. Low complexity-rich tracts occupy residues 843-865 (QPPL…LLQH) and 897-913 (SLQL…QQPP). Residues 914-940 (REQPLPPAPLAMPHIKPPPTTPIPQLP) are compositionally biased toward pro residues. Positions 970-980 (KPLSSLSTHHP) are enriched in low complexity. A compositionally biased stretch (pro residues) spans 1030 to 1052 (PQPPFAQHPFVPGGPPPITPPTC). The span at 1053-1085 (PSTSTPPAGPGTSAQPPCSGAAASGGSIAGGSS) shows a compositional bias: low complexity. 3 positions are modified to phosphoserine: serine 1106, serine 1113, and serine 1115. Residues 1106–1117 (SPPPPPRSPSPE) are compositionally biased toward pro residues. Threonine 1119 is subject to Phosphothreonine. Positions 1156 to 1211 (GSKLAKKREEAIEKAKREAEQKAREEREREKEKEKEREREREREREAERAAKASSS) form a coiled coil. Lysine 1158 is modified (N6-acetyllysine). The span at 1162 to 1206 (KREEAIEKAKREAEQKAREEREREKEKEKEREREREREREAERAA) shows a compositional bias: basic and acidic residues. Residues 1162–1246 (KREEAIEKAK…TTIAAVPPYI (85 aa)) are disordered. Tyrosine 1259 carries the phosphotyrosine modification. At serine 1266 the chain carries Phosphoserine.

Interacts with HDAC1. Interacts with ATN1. Interaction with ATN1 is improved when the poly-Gln region of ATN1 is extended. Interacts with FAT1. As to expression, widely expressed. Expressed in tumor cell lines.

The protein localises to the nucleus. Plays a role as a transcriptional repressor during development. May play a role in the control of cell survival. Overexpression of RERE recruits BAX to the nucleus particularly to POD and triggers caspase-3 activation, leading to cell death. The polypeptide is Arginine-glutamic acid dipeptide repeats protein (RERE) (Homo sapiens (Human)).